Reading from the N-terminus, the 304-residue chain is N-acetylmuramic acid 6-phosphate etherase (304 aa).

One can recognise an SIS domain in the interval 58 to 221 (IAERIHRGGR…STGVMIKLGK (164 aa)). Catalysis depends on glutamate 86, which acts as the Proton donor. Glutamate 117 is a catalytic residue.

It belongs to the GCKR-like family. MurNAc-6-P etherase subfamily. As to quaternary structure, homodimer.

It carries out the reaction N-acetyl-D-muramate 6-phosphate + H2O = N-acetyl-D-glucosamine 6-phosphate + (R)-lactate. It participates in amino-sugar metabolism; N-acetylmuramate degradation. Functionally, specifically catalyzes the cleavage of the D-lactyl ether substituent of MurNAc 6-phosphate, producing GlcNAc 6-phosphate and D-lactate. The chain is N-acetylmuramic acid 6-phosphate etherase from Clostridium beijerinckii (strain ATCC 51743 / NCIMB 8052) (Clostridium acetobutylicum).